Here is a 485-residue protein sequence, read N- to C-terminus: Glutamyl-tRNA(Gln) amidotransferase subunit A (485 aa).

Residues Lys-79 and Ser-154 each act as charge relay system in the active site. Ser-178 acts as the Acyl-ester intermediate in catalysis.

It belongs to the amidase family. GatA subfamily. As to quaternary structure, heterotrimer of A, B and C subunits.

The enzyme catalyses L-glutamyl-tRNA(Gln) + L-glutamine + ATP + H2O = L-glutaminyl-tRNA(Gln) + L-glutamate + ADP + phosphate + H(+). Its function is as follows. Allows the formation of correctly charged Gln-tRNA(Gln) through the transamidation of misacylated Glu-tRNA(Gln) in organisms which lack glutaminyl-tRNA synthetase. The reaction takes place in the presence of glutamine and ATP through an activated gamma-phospho-Glu-tRNA(Gln). This is Glutamyl-tRNA(Gln) amidotransferase subunit A from Staphylococcus saprophyticus subsp. saprophyticus (strain ATCC 15305 / DSM 20229 / NCIMB 8711 / NCTC 7292 / S-41).